A 1755-amino-acid chain; its full sequence is E3 ubiquitin-protein ligase UBR2 (1755 aa).

The residue at position 2 (Ala2) is an N-acetylalanine. Lys94 participates in a covalent cross-link: Glycyl lysine isopeptide (Lys-Gly) (interchain with G-Cter in ubiquitin). The segment at 97–168 adopts a UBR-type zinc-finger fold; it reads HLCGRVFKVG…EGPYCQKHEL (72 aa). Positions 99, 112, 115, 124, 127, 133, and 136 each coordinate Zn(2+). Phe148 contributes to the a peptide binding site. Position 149 (Cys149) interacts with Zn(2+). Asp150 contacts a peptide. Cys151 serves as a coordination point for Zn(2+). Asp153 serves as a coordination point for a peptide. Lys158 is covalently cross-linked (Glycyl lysine isopeptide (Lys-Gly) (interchain with G-Cter in ubiquitin)). Cys163 is a Zn(2+) binding site. A Glycyl lysine isopeptide (Lys-Gly) (interchain with G-Cter in ubiquitin) cross-link involves residue Lys165. Zn(2+) is bound at residue His166. Residues Lys248, Lys255, and Lys470 each participate in a glycyl lysine isopeptide (Lys-Gly) (interchain with G-Cter in ubiquitin) cross-link. Ser476 bears the Phosphoserine mark. Residues Lys488, Lys568, Lys779, and Lys789 each participate in a glycyl lysine isopeptide (Lys-Gly) (interchain with G-Cter in ubiquitin) cross-link. The segment at 1004–1034 is disordered; it reads ESSPTSPVAETEGTIMEESSRDKDKAERKRK. Residues 1019–1054 are a coiled coil; it reads MEESSRDKDKAERKRKAEIARLRREKIMAQMSEMQR. The span at 1021-1034 shows a compositional bias: basic and acidic residues; it reads ESSRDKDKAERKRK. Zn(2+) is bound by residues Cys1108, Cys1111, Cys1168, His1170, His1173, Cys1176, Cys1210, and Cys1213. Residues 1108-1214 form an RING-type; atypical zinc finger; the sequence is CILCQEEQEV…NGEFLCPLCE (107 aa). The disordered stretch occupies residues 1261–1287; sequence RKEESTPNNASTKNSENVDELQLPEGF. A compositionally biased stretch (polar residues) spans 1266–1275; that stretch reads TPNNASTKNS. Residues Lys1496, Lys1599, and Lys1689 each participate in a glycyl lysine isopeptide (Lys-Gly) (interchain with G-Cter in ubiquitin) cross-link. Ser1694 carries the post-translational modification Phosphoserine. Tyr1697 carries the phosphotyrosine modification.

Belongs to the E3 ubiquitin-protein ligase UBR1-like family. As to quaternary structure, interacts with UBE2B; promotes the UBE2B-H2A interaction and the ubiquitination of histone H2A by UBE2B and UBR2. Interacts with RECQL4. Interacts with TEX19; does not lead to TEX19 degradation and stabilizes it. Interacts with CASP8. Interacts with ATXN3. Interacts with UBE2O. Post-translationally, dephosphorylated by DUSP22 at Ser-1694 and Tyr-1697, leading to subsequent ubiquitination and proteasomal degradation. 'Lys-48'-linked ubiquitinated at Lys-94, Lys-779 and Lys-1599 following DUSP22-mediated dephosphorylation of Ser-1694 and Tyr-1697 which promotes UBR2 interaction with the SCF(FBW1A) E3 ubiquitin-protein ligase complex. In terms of tissue distribution, broadly expressed, with highest levels in skeletal muscle, kidney and pancreas. Present in acinar cells of the pancreas (at protein level).

It is found in the nucleus. The protein localises to the chromosome. It catalyses the reaction S-ubiquitinyl-[E2 ubiquitin-conjugating enzyme]-L-cysteine + [acceptor protein]-L-lysine = [E2 ubiquitin-conjugating enzyme]-L-cysteine + N(6)-ubiquitinyl-[acceptor protein]-L-lysine.. It participates in protein modification; protein ubiquitination. Functionally, E3 ubiquitin-protein ligase which is a component of the N-end rule pathway. Recognizes and binds to proteins bearing specific N-terminal residues (N-degrons) that are destabilizing according to the N-end rule, leading to their ubiquitination and subsequent degradation. Recognizes both type-1 and type-2 N-degrons, containing positively charged amino acids (Arg, Lys and His) and bulky and hydrophobic amino acids, respectively. Does not ubiquitinate proteins that are acetylated at the N-terminus. In contrast, it strongly binds methylated N-degrons. Plays a critical role in chromatin inactivation and chromosome-wide transcriptional silencing during meiosis via ubiquitination of histone H2A. Binds leucine and is a negative regulator of the leucine-mTOR signaling pathway, thereby controlling cell growth. Required for spermatogenesis, promotes, with Tex19.1, SPO11-dependent recombination foci to accumulate and drive robust homologous chromosome synapsis. Polyubiquitinates LINE-1 retrotransposon encoded, LIRE1, which induces degradation, inhibiting LINE-1 retrotransposon mobilization. Catalyzes ubiquitination and degradation of the N-terminal part of NLRP1 following NLRP1 activation by pathogens and other damage-associated signals: ubiquitination promotes degradation of the N-terminal part and subsequent release of the cleaved C-terminal part of NLRP1, which polymerizes and forms the NLRP1 inflammasome followed by host cell pyroptosis. Plays a role in T-cell receptor signaling by inducing 'Lys-63'-linked ubiquitination of lymphocyte cell-specific kinase LCK. This activity is regulated by DUSP22, which induces 'Lys-48'-linked ubiquitination of UBR2, leading to its proteasomal degradation by SCF E3 ubiquitin-protein ligase complex. This chain is E3 ubiquitin-protein ligase UBR2 (UBR2), found in Homo sapiens (Human).